Consider the following 516-residue polypeptide: GMP synthase [glutamine-hydrolyzing] (516 aa).

In terms of domain architecture, Glutamine amidotransferase type-1 spans 5 to 199; it reads SIIVLDFGSQ…ARNICGVTEK (195 aa). The Nucleophile role is filled by C82. Catalysis depends on residues H173 and E175. The 192-residue stretch at 200–391 folds into the GMPS ATP-PPase domain; sequence WKMEHFLKEQ…LGLPESMINR (192 aa). An ATP-binding site is contributed by 227–233; it reads SGGVDSS.

Homodimer.

It carries out the reaction XMP + L-glutamine + ATP + H2O = GMP + L-glutamate + AMP + diphosphate + 2 H(+). It functions in the pathway purine metabolism; GMP biosynthesis; GMP from XMP (L-Gln route): step 1/1. Catalyzes the synthesis of GMP from XMP. The chain is GMP synthase [glutamine-hydrolyzing] from Sulfurimonas denitrificans (strain ATCC 33889 / DSM 1251) (Thiomicrospira denitrificans (strain ATCC 33889 / DSM 1251)).